Reading from the N-terminus, the 332-residue chain is Ferredoxin--NADP reductase (332 aa).

T20, E39, Q47, Y52, V92, F126, D288, and S329 together coordinate FAD.

It belongs to the ferredoxin--NADP reductase type 2 family. In terms of assembly, homodimer. Requires FAD as cofactor.

The enzyme catalyses 2 reduced [2Fe-2S]-[ferredoxin] + NADP(+) + H(+) = 2 oxidized [2Fe-2S]-[ferredoxin] + NADPH. The protein is Ferredoxin--NADP reductase of Geobacillus thermodenitrificans (strain NG80-2).